The sequence spans 427 residues: Serine--tRNA ligase (427 aa).

231-233 (TAE) is an L-serine binding site. ATP is bound at residue 262–264 (RSE). L-serine is bound at residue glutamate 285. 349-352 (EISS) contacts ATP. Serine 385 contributes to the L-serine binding site.

The protein belongs to the class-II aminoacyl-tRNA synthetase family. Type-1 seryl-tRNA synthetase subfamily. As to quaternary structure, homodimer. The tRNA molecule binds across the dimer.

The protein localises to the cytoplasm. It carries out the reaction tRNA(Ser) + L-serine + ATP = L-seryl-tRNA(Ser) + AMP + diphosphate + H(+). The enzyme catalyses tRNA(Sec) + L-serine + ATP = L-seryl-tRNA(Sec) + AMP + diphosphate + H(+). It functions in the pathway aminoacyl-tRNA biosynthesis; selenocysteinyl-tRNA(Sec) biosynthesis; L-seryl-tRNA(Sec) from L-serine and tRNA(Sec): step 1/1. Its function is as follows. Catalyzes the attachment of serine to tRNA(Ser). Is also able to aminoacylate tRNA(Sec) with serine, to form the misacylated tRNA L-seryl-tRNA(Sec), which will be further converted into selenocysteinyl-tRNA(Sec). The protein is Serine--tRNA ligase of Brucella abortus (strain S19).